The primary structure comprises 461 residues: Bifunctional protein HldE (461 aa).

Residues 1–311 form a ribokinase region; sequence MKKILVVGDL…EEIALILNQT (311 aa). 191 to 194 is an ATP binding site; sequence NRAE. Aspartate 260 is a catalytic residue. Positions 332-461 are cytidylyltransferase; it reads FTNGCFDLLH…IEKIKRTHND (130 aa).

In the N-terminal section; belongs to the carbohydrate kinase PfkB family. The protein in the C-terminal section; belongs to the cytidylyltransferase family. As to quaternary structure, homodimer.

It catalyses the reaction D-glycero-beta-D-manno-heptose 7-phosphate + ATP = D-glycero-beta-D-manno-heptose 1,7-bisphosphate + ADP + H(+). The catalysed reaction is D-glycero-beta-D-manno-heptose 1-phosphate + ATP + H(+) = ADP-D-glycero-beta-D-manno-heptose + diphosphate. The protein operates within nucleotide-sugar biosynthesis; ADP-L-glycero-beta-D-manno-heptose biosynthesis; ADP-L-glycero-beta-D-manno-heptose from D-glycero-beta-D-manno-heptose 7-phosphate: step 1/4. Its pathway is nucleotide-sugar biosynthesis; ADP-L-glycero-beta-D-manno-heptose biosynthesis; ADP-L-glycero-beta-D-manno-heptose from D-glycero-beta-D-manno-heptose 7-phosphate: step 3/4. Its function is as follows. Catalyzes the phosphorylation of D-glycero-D-manno-heptose 7-phosphate at the C-1 position to selectively form D-glycero-beta-D-manno-heptose-1,7-bisphosphate. Functionally, catalyzes the ADP transfer from ATP to D-glycero-beta-D-manno-heptose 1-phosphate, yielding ADP-D-glycero-beta-D-manno-heptose. The sequence is that of Bifunctional protein HldE from Helicobacter pylori (strain P12).